Reading from the N-terminus, the 739-residue chain is UPF0313 protein YgiQ (739 aa).

The Radical SAM core domain occupies 372–650 (AYEMIRFSVN…KALLRYHDPA (279 aa)). C386, C390, and C393 together coordinate [4Fe-4S] cluster. A disordered region spans residues 685 to 739 (REARRQNRNTRPALTKHTPMATQRQTPATAKKASSTQSRPVNAGAKKRPKAAVGR). The segment covering 704-724 (MATQRQTPATAKKASSTQSRP) has biased composition (polar residues). The segment covering 729 to 739 (AKKRPKAAVGR) has biased composition (basic residues).

Belongs to the UPF0313 family. [4Fe-4S] cluster serves as cofactor.

The polypeptide is UPF0313 protein YgiQ (ygiQ) (Escherichia coli (strain K12)).